A 120-amino-acid polypeptide reads, in one-letter code: NAD(P)H-quinone oxidoreductase subunit 3, chloroplastic (120 aa).

The next 3 helical transmembrane spans lie at 9–29 (IFWA…LISG), 64–84 (MFAL…PWAV), and 88–108 (ILGV…VVGS).

Belongs to the complex I subunit 3 family. In terms of assembly, NDH is composed of at least 16 different subunits, 5 of which are encoded in the nucleus.

Its subcellular location is the plastid. It is found in the chloroplast thylakoid membrane. It catalyses the reaction a plastoquinone + NADH + (n+1) H(+)(in) = a plastoquinol + NAD(+) + n H(+)(out). It carries out the reaction a plastoquinone + NADPH + (n+1) H(+)(in) = a plastoquinol + NADP(+) + n H(+)(out). Its function is as follows. NDH shuttles electrons from NAD(P)H:plastoquinone, via FMN and iron-sulfur (Fe-S) centers, to quinones in the photosynthetic chain and possibly in a chloroplast respiratory chain. The immediate electron acceptor for the enzyme in this species is believed to be plastoquinone. Couples the redox reaction to proton translocation, and thus conserves the redox energy in a proton gradient. The sequence is that of NAD(P)H-quinone oxidoreductase subunit 3, chloroplastic from Nymphaea alba (White water-lily).